The sequence spans 451 residues: Glucose-6-phosphate isomerase (451 aa).

Thr38 bears the Phosphothreonine mark. The active-site Proton donor is Glu290. Catalysis depends on residues His311 and Lys425.

The protein belongs to the GPI family.

It is found in the cytoplasm. The catalysed reaction is alpha-D-glucose 6-phosphate = beta-D-fructose 6-phosphate. The protein operates within carbohydrate biosynthesis; gluconeogenesis. It functions in the pathway carbohydrate degradation; glycolysis; D-glyceraldehyde 3-phosphate and glycerone phosphate from D-glucose: step 2/4. Its function is as follows. Catalyzes the reversible isomerization of glucose-6-phosphate to fructose-6-phosphate. In Shouchella clausii (strain KSM-K16) (Alkalihalobacillus clausii), this protein is Glucose-6-phosphate isomerase.